The sequence spans 626 residues: Polyphenol oxidase C, chloroplastic (626 aa).

A chloroplast-targeting transit peptide spans 1-83 (MASLCSNSST…ANAIPLAASA (83 aa)). Cystine bridges form between cysteine 94–cysteine 110 and cysteine 109–cysteine 177. 6 residues coordinate Cu cation: histidine 176, histidine 194, histidine 203, histidine 324, histidine 328, and histidine 366. Positions 180–194 (CNGGYSIDGKVLQVH) form a cross-link, 2'-(S-cysteinyl)-histidine (Cys-His).

Belongs to the tyrosinase family. Cu(2+) serves as cofactor.

The protein resides in the plastid. The protein localises to the chloroplast thylakoid lumen. The enzyme catalyses 2 catechol + O2 = 2 1,2-benzoquinone + 2 H2O. In terms of biological role, catalyzes the oxidation of mono- and o-diphenols to o-diquinones. This is Polyphenol oxidase C, chloroplastic from Solanum lycopersicum (Tomato).